The primary structure comprises 194 residues: Phosphoheptose isomerase (194 aa).

Residues 37–194 (IAKSFKNKNK…IIEKEMKKIN (158 aa)) enclose the SIS domain. A substrate-binding site is contributed by 52–54 (NGG). Zn(2+) is bound by residues H61 and E65. Residues E65, 93-94 (ND), 119-121 (STS), S124, and Q172 each bind substrate. Zn(2+)-binding residues include Q172 and H180.

The protein belongs to the SIS family. GmhA subfamily. Homotetramer. Zn(2+) is required as a cofactor.

It is found in the cytoplasm. The enzyme catalyses 2 D-sedoheptulose 7-phosphate = D-glycero-alpha-D-manno-heptose 7-phosphate + D-glycero-beta-D-manno-heptose 7-phosphate. It participates in carbohydrate biosynthesis; D-glycero-D-manno-heptose 7-phosphate biosynthesis; D-glycero-alpha-D-manno-heptose 7-phosphate and D-glycero-beta-D-manno-heptose 7-phosphate from sedoheptulose 7-phosphate: step 1/1. Its function is as follows. Catalyzes the isomerization of sedoheptulose 7-phosphate in D-glycero-D-manno-heptose 7-phosphate. This is Phosphoheptose isomerase from Buchnera aphidicola subsp. Schizaphis graminum (strain Sg).